Reading from the N-terminus, the 515-residue chain is Maturase K (515 aa).

It belongs to the intron maturase 2 family. MatK subfamily.

The protein resides in the plastid. The protein localises to the chloroplast. Its function is as follows. Usually encoded in the trnK tRNA gene intron. Probably assists in splicing its own and other chloroplast group II introns. The chain is Maturase K from Cedrus deodara (Deodar cedar).